Consider the following 427-residue polypeptide: L-threonine dehydratase biosynthetic IlvA (427 aa).

Lys-63 is subject to N6-(pyridoxal phosphate)lysine. Pyridoxal 5'-phosphate contacts are provided by residues Asn-90, Gly-193 to Cys-197, and Ser-319. Residues His-343–Pro-417 enclose the ACT-like domain.

The protein belongs to the serine/threonine dehydratase family. Homotetramer. The cofactor is pyridoxal 5'-phosphate.

The catalysed reaction is L-threonine = 2-oxobutanoate + NH4(+). Its pathway is amino-acid biosynthesis; L-isoleucine biosynthesis; 2-oxobutanoate from L-threonine: step 1/1. Catalyzes the anaerobic formation of alpha-ketobutyrate and ammonia from threonine in a two-step reaction. The first step involved a dehydration of threonine and a production of enamine intermediates (aminocrotonate), which tautomerizes to its imine form (iminobutyrate). Both intermediates are unstable and short-lived. The second step is the nonenzymatic hydrolysis of the enamine/imine intermediates to form 2-ketobutyrate and free ammonia. In the low water environment of the cell, the second step is accelerated by RidA. The chain is L-threonine dehydratase biosynthetic IlvA (ilvA) from Mycobacterium leprae (strain TN).